A 748-amino-acid chain; its full sequence is Phosphoribosylformylglycinamidine synthase subunit PurL (748 aa).

Residue His47 is part of the active site. ATP-binding residues include Tyr50 and Lys90. Mg(2+) is bound at residue Glu92. Substrate is bound by residues 93–96 (SHNH) and Arg115. His94 acts as the Proton acceptor in catalysis. Mg(2+) is bound at residue Asp116. Gln240 is a binding site for substrate. Asp268 serves as a coordination point for Mg(2+). Residue 312 to 314 (ESQ) coordinates substrate. ATP-binding residues include Asn500 and Gly537. Mg(2+) is bound at residue Asn538. Residue Ser540 coordinates substrate.

The protein belongs to the FGAMS family. As to quaternary structure, monomer. Part of the FGAM synthase complex composed of 1 PurL, 1 PurQ and 2 PurS subunits.

Its subcellular location is the cytoplasm. The enzyme catalyses N(2)-formyl-N(1)-(5-phospho-beta-D-ribosyl)glycinamide + L-glutamine + ATP + H2O = 2-formamido-N(1)-(5-O-phospho-beta-D-ribosyl)acetamidine + L-glutamate + ADP + phosphate + H(+). Its pathway is purine metabolism; IMP biosynthesis via de novo pathway; 5-amino-1-(5-phospho-D-ribosyl)imidazole from N(2)-formyl-N(1)-(5-phospho-D-ribosyl)glycinamide: step 1/2. Its function is as follows. Part of the phosphoribosylformylglycinamidine synthase complex involved in the purines biosynthetic pathway. Catalyzes the ATP-dependent conversion of formylglycinamide ribonucleotide (FGAR) and glutamine to yield formylglycinamidine ribonucleotide (FGAM) and glutamate. The FGAM synthase complex is composed of three subunits. PurQ produces an ammonia molecule by converting glutamine to glutamate. PurL transfers the ammonia molecule to FGAR to form FGAM in an ATP-dependent manner. PurS interacts with PurQ and PurL and is thought to assist in the transfer of the ammonia molecule from PurQ to PurL. The polypeptide is Phosphoribosylformylglycinamidine synthase subunit PurL (Leptospira biflexa serovar Patoc (strain Patoc 1 / Ames)).